The sequence spans 265 residues: tRNA pseudouridine synthase A (265 aa).

Asp-53 acts as the Nucleophile in catalysis. Position 111 (Tyr-111) interacts with substrate.

Belongs to the tRNA pseudouridine synthase TruA family. Homodimer.

It carries out the reaction uridine(38/39/40) in tRNA = pseudouridine(38/39/40) in tRNA. Formation of pseudouridine at positions 38, 39 and 40 in the anticodon stem and loop of transfer RNAs. The protein is tRNA pseudouridine synthase A of Acinetobacter baumannii (strain ATCC 17978 / DSM 105126 / CIP 53.77 / LMG 1025 / NCDC KC755 / 5377).